The following is a 747-amino-acid chain: Fatty acid oxidation complex subunit alpha (747 aa).

The segment at 1–197 (MGASATNSVT…KMGLVDDVVP (197 aa)) is enoyl-CoA hydratase. The 3-hydroxyacyl-CoA dehydrogenase stretch occupies residues 313–747 (RAIHRVGVLG…NIDEVTDVAS (435 aa)). The segment at 590 to 614 (YLYSNPTKNSSPTKNGNSPAKRNSF) is disordered. Residues 593–610 (SNPTKNSSPTKNGNSPAK) show a composition bias toward polar residues.

In the N-terminal section; belongs to the enoyl-CoA hydratase/isomerase family. The protein in the central section; belongs to the 3-hydroxyacyl-CoA dehydrogenase family. Heterotetramer of two alpha chains (FadJ) and two beta chains (FadI).

The protein localises to the cytoplasm. The catalysed reaction is a (3S)-3-hydroxyacyl-CoA = a (2E)-enoyl-CoA + H2O. It carries out the reaction a 4-saturated-(3S)-3-hydroxyacyl-CoA = a (3E)-enoyl-CoA + H2O. It catalyses the reaction a (3S)-3-hydroxyacyl-CoA + NAD(+) = a 3-oxoacyl-CoA + NADH + H(+). The enzyme catalyses (3S)-3-hydroxybutanoyl-CoA = (3R)-3-hydroxybutanoyl-CoA. Its pathway is lipid metabolism; fatty acid beta-oxidation. Its function is as follows. Catalyzes the formation of a hydroxyacyl-CoA by addition of water on enoyl-CoA. Also exhibits 3-hydroxyacyl-CoA epimerase and 3-hydroxyacyl-CoA dehydrogenase activities. The sequence is that of Fatty acid oxidation complex subunit alpha from Yersinia pseudotuberculosis serotype O:1b (strain IP 31758).